Consider the following 952-residue polypeptide: MPPIYVKPENALKRSEELLALGTPQSQQQAFDNLVEVFQSKRFKQTPINVLEPIVTKFIDLCVVLSRKAHAKSGLLVFKSAAQTTNVGAIERVLNHFIAKAEARLAAAVEQAKKEVAALPDVPVVDDDLPLQPASLMLDCFVDSAGDRERIERRLIAPAQKFCWDSYDICLDIAKSNDRLEVIYQSIAHRAFHFCKIHQRKADFRRLCEQRLRKDLANAAKYSHQQHAINLSDPETLGRFLDTRFLQLETAVELELWQEAFRSIEDVHGLIAGRKGTKPSMMANYYEKLTQIFKAEGGKQTAVFHAAAWARYFQHAERAGIVNDKASGCVLLSALAVPLGEVEVKQRLVALLNLPKTPTREALVQDAAAKHLKRVPADIRQIYKILEVDFEPTTASKVLAPLITSLSPEYQPYLPALRDVVLSRLLQALAQVYDSVTLSHILDLVKPLDNTPWATDMSSLEKFLVTACRRGDIRASVDHVAQTITFVSTPPDANGLQTLAVCLYNTIQYLNPSRLAPVSRSDAFAAAIAQAEEERKAASHKRQIVIRRRELLEEAKLRREKEASTALAERLKIKAEEDARRAKEEAKQAEIDRVRKQIHETKQAEAKQLAASLAAQGALKVDISSIEDLDSSKLVAMQVEQLAKEKKELSERLRIVGKRVDHLERAMRKEERPLLAQDYERQKAEDRAAHDRANQIAREQAIEQQRAARELKQRLGRMLEDYEAVKERIESQMQEELKAAKEEARRKIEEEKAQLREKVIKRKREEKERKLKEAREAEERKRKEEEEAAQKAEEEARAAAALEAEAAAAEQRRAEREAQRQSDLERIRAQQEREEEALRRRQAEKAAATSGGSAYRPPARAGTTPPTASPAPSSGGPSWLARRKAMEAQSAGGAPVASSPKPVPSNSAAASAPASNGPESIAGEAEKPALTGSVWRRGMGARRGMPSTRGGA.

In terms of domain architecture, PCI spans 315–491 (HAERAGIVND…QTITFVSTPP (177 aa)). A coiled-coil region spans residues 522 to 849 (DAFAAAIAQA…RRQAEKAAAT (328 aa)). The span at 757–797 (EKVIKRKREEKERKLKEAREAEERKRKEEEEAAQKAEEEAR) shows a compositional bias: basic and acidic residues. Positions 757–952 (EKVIKRKREE…RGMPSTRGGA (196 aa)) are disordered. Over residues 798 to 809 (AAAALEAEAAAA) the composition is skewed to low complexity. The span at 810 to 844 (EQRRAEREAQRQSDLERIRAQQEREEEALRRRQAE) shows a compositional bias: basic and acidic residues. 2 stretches are compositionally biased toward low complexity: residues 856–878 (RPPARAGTTPPTASPAPSSGGPS) and 893–918 (GAPVASSPKPVPSNSAAASAPASNGP).

It belongs to the eIF-3 subunit A family. In terms of assembly, component of the eukaryotic translation initiation factor 3 (eIF-3) complex.

The protein resides in the cytoplasm. Its function is as follows. RNA-binding component of the eukaryotic translation initiation factor 3 (eIF-3) complex, which is involved in protein synthesis of a specialized repertoire of mRNAs and, together with other initiation factors, stimulates binding of mRNA and methionyl-tRNAi to the 40S ribosome. The eIF-3 complex specifically targets and initiates translation of a subset of mRNAs involved in cell proliferation. The protein is Eukaryotic translation initiation factor 3 subunit A of Cryptococcus neoformans var. neoformans serotype D (strain B-3501A) (Filobasidiella neoformans).